Reading from the N-terminus, the 877-residue chain is Phosphoenolpyruvate carboxylase (877 aa).

Catalysis depends on residues histidine 138 and lysine 543.

This sequence belongs to the PEPCase type 1 family. Mg(2+) is required as a cofactor.

It catalyses the reaction oxaloacetate + phosphate = phosphoenolpyruvate + hydrogencarbonate. In terms of biological role, forms oxaloacetate, a four-carbon dicarboxylic acid source for the tricarboxylic acid cycle. In Aeromonas salmonicida (strain A449), this protein is Phosphoenolpyruvate carboxylase.